The sequence spans 475 residues: Protein nucleotidyltransferase YdiU (475 aa).

Gly82, Gly84, Arg85, Lys105, Asp117, Gly118, Arg168, and Arg175 together coordinate ATP. The Proton acceptor role is filled by Asp240. Positions 241 and 250 each coordinate Mg(2+). Asp250 contacts ATP.

This sequence belongs to the SELO family. Requires Mg(2+) as cofactor. Mn(2+) serves as cofactor.

The catalysed reaction is L-seryl-[protein] + ATP = 3-O-(5'-adenylyl)-L-seryl-[protein] + diphosphate. It carries out the reaction L-threonyl-[protein] + ATP = 3-O-(5'-adenylyl)-L-threonyl-[protein] + diphosphate. The enzyme catalyses L-tyrosyl-[protein] + ATP = O-(5'-adenylyl)-L-tyrosyl-[protein] + diphosphate. It catalyses the reaction L-histidyl-[protein] + UTP = N(tele)-(5'-uridylyl)-L-histidyl-[protein] + diphosphate. The catalysed reaction is L-seryl-[protein] + UTP = O-(5'-uridylyl)-L-seryl-[protein] + diphosphate. It carries out the reaction L-tyrosyl-[protein] + UTP = O-(5'-uridylyl)-L-tyrosyl-[protein] + diphosphate. Nucleotidyltransferase involved in the post-translational modification of proteins. It can catalyze the addition of adenosine monophosphate (AMP) or uridine monophosphate (UMP) to a protein, resulting in modifications known as AMPylation and UMPylation. The protein is Protein nucleotidyltransferase YdiU of Aeromonas hydrophila subsp. hydrophila (strain ATCC 7966 / DSM 30187 / BCRC 13018 / CCUG 14551 / JCM 1027 / KCTC 2358 / NCIMB 9240 / NCTC 8049).